The chain runs to 185 residues: Translation initiation factor IF-3 (185 aa).

The protein belongs to the IF-3 family. In terms of assembly, monomer.

It localises to the cytoplasm. In terms of biological role, IF-3 binds to the 30S ribosomal subunit and shifts the equilibrium between 70S ribosomes and their 50S and 30S subunits in favor of the free subunits, thus enhancing the availability of 30S subunits on which protein synthesis initiation begins. The polypeptide is Translation initiation factor IF-3 (Rickettsia felis (strain ATCC VR-1525 / URRWXCal2) (Rickettsia azadi)).